Reading from the N-terminus, the 468-residue chain is MPDRPVRTRIAPSPTGMMHIGTARTALFNWLYARHTGGKFLLRIEDTDRERSTDEAVKVIFDGLKWLGLDADEPPVFQFARADRHREAAETLLARGGAYRDYMTPEELEAEREVARAEGRVVRSPWRDASPNDAPDRPFVVRLKAPQEGETVIQDAVKGEVRFQNKQLDDLILLRTDGTPTYNLAVVVDDHDMGVTHVIRGDDHLNNAARQTLIYQGLGWEVPVWAHLPLIHGPDGAKLSKRHGAQAVSEFDSMGYLPETMRNYLAKLGWGHGDDEIFSDEQAIAWFDINDVVSAPARLDWAKLNHLNNHYIRQAEPARLAELVKTVLASRDWPLEAGDMAVIERTIPFVRDGAKTTLELADNVVFALKRRPLELPEKTRTQMTEELRGRLSRLREALAAVEYWDVPSLEAALRAFAEAEGVGLGKFGPQLRAVLSGGAPAPDLAGAMVALTRDESLGRLDDALSPSA.

A 'HIGH' region motif is present at residues 12 to 22 (PSPTGMMHIGT). The 'KMSKS' region signature appears at 238 to 242 (KLSKR). Lys241 lines the ATP pocket.

The protein belongs to the class-I aminoacyl-tRNA synthetase family. Glutamate--tRNA ligase type 1 subfamily. In terms of assembly, monomer.

Its subcellular location is the cytoplasm. The catalysed reaction is tRNA(Glu) + L-glutamate + ATP = L-glutamyl-tRNA(Glu) + AMP + diphosphate. In terms of biological role, catalyzes the attachment of glutamate to tRNA(Glu) in a two-step reaction: glutamate is first activated by ATP to form Glu-AMP and then transferred to the acceptor end of tRNA(Glu). The sequence is that of Glutamate--tRNA ligase from Phenylobacterium zucineum (strain HLK1).